A 977-amino-acid chain; its full sequence is DNA-directed RNA polymerase 3A, chloroplastic (977 aa).

Residues 1–72 constitute a chloroplast transit peptide; that stretch reads MASTASYSPS…NNIQSQTTVC (72 aa). Active-site residues include D678, K753, and D910.

The protein belongs to the phage and mitochondrial RNA polymerase family.

The protein localises to the plastid. It localises to the chloroplast. The enzyme catalyses RNA(n) + a ribonucleoside 5'-triphosphate = RNA(n+1) + diphosphate. Functionally, DNA-dependent RNA polymerase catalyzes the transcription of DNA into RNA using the four ribonucleoside triphosphates as substrates. The polypeptide is DNA-directed RNA polymerase 3A, chloroplastic (RPOT3-SYL) (Nicotiana tabacum (Common tobacco)).